Here is a 391-residue protein sequence, read N- to C-terminus: Phosphoglycerate kinase (391 aa).

Substrate is bound by residues 23–25, Arg38, 61–64, Arg117, and Arg150; these read DFN and HLGK. ATP-binding positions include Lys201, Gly291, Glu322, and 348-351; that span reads GGDS.

The protein belongs to the phosphoglycerate kinase family. As to quaternary structure, monomer.

The protein resides in the cytoplasm. The enzyme catalyses (2R)-3-phosphoglycerate + ATP = (2R)-3-phospho-glyceroyl phosphate + ADP. It functions in the pathway carbohydrate degradation; glycolysis; pyruvate from D-glyceraldehyde 3-phosphate: step 2/5. The chain is Phosphoglycerate kinase from Clostridium beijerinckii (strain ATCC 51743 / NCIMB 8052) (Clostridium acetobutylicum).